A 239-amino-acid chain; its full sequence is Ribonuclease PH (239 aa).

Phosphate contacts are provided by residues arginine 86 and 124-126 (GTR).

The protein belongs to the RNase PH family. As to quaternary structure, homohexameric ring arranged as a trimer of dimers.

It carries out the reaction tRNA(n+1) + phosphate = tRNA(n) + a ribonucleoside 5'-diphosphate. Phosphorolytic 3'-5' exoribonuclease that plays an important role in tRNA 3'-end maturation. Removes nucleotide residues following the 3'-CCA terminus of tRNAs; can also add nucleotides to the ends of RNA molecules by using nucleoside diphosphates as substrates, but this may not be physiologically important. Probably plays a role in initiation of 16S rRNA degradation (leading to ribosome degradation) during starvation. In Anaeromyxobacter dehalogenans (strain 2CP-C), this protein is Ribonuclease PH.